Reading from the N-terminus, the 653-residue chain is Chaperone protein dnaK3 (653 aa).

T197 carries the post-translational modification Phosphothreonine; by autocatalysis.

This sequence belongs to the heat shock protein 70 family.

Its function is as follows. Acts as a chaperone. This chain is Chaperone protein dnaK3 (dnaK3), found in Nostoc sp. (strain PCC 7120 / SAG 25.82 / UTEX 2576).